Consider the following 64-residue polypeptide: Bactridin-2 (64 aa).

One can recognise an LCN-type CS-alpha/beta domain in the interval 1-63 (KDGYLVGNDG…TWNRATNRCG (63 aa)). Intrachain disulfides connect Cys-11–Cys-62, Cys-15–Cys-37, Cys-23–Cys-43, and Cys-27–Cys-45.

It belongs to the long (4 C-C) scorpion toxin superfamily. Sodium channel inhibitor family. Beta subfamily. In terms of tissue distribution, expressed by the venom gland.

Its subcellular location is the secreted. Its function is as follows. Shows antibacterial activity against both Gram-positive bacteria (B.subtilis, M.luteus, E.faecalis) and Gram-negative bacteria (P.aeruginosa, Y.enterocolitica, A.calcoaceticus). Modifies membrane sodium permeability on Y.enterocolitica. Is toxic to mice, but is not to crabs. Induces concentration dependent haemolysis in human erythrocytes. Acts by inhibiting the sodium (Nav) currents. The polypeptide is Bactridin-2 (Tityus discrepans (Venezuelan scorpion)).